Reading from the N-terminus, the 630-residue chain is tRNA uridine 5-carboxymethylaminomethyl modification enzyme MnmG (630 aa).

An FAD-binding site is contributed by 13–18 (GGGHAG). NAD(+) is bound at residue 273-287 (GPRYCPSIEDKVMRF).

It belongs to the MnmG family. As to quaternary structure, homodimer. Heterotetramer of two MnmE and two MnmG subunits. Requires FAD as cofactor.

Its subcellular location is the cytoplasm. Functionally, NAD-binding protein involved in the addition of a carboxymethylaminomethyl (cmnm) group at the wobble position (U34) of certain tRNAs, forming tRNA-cmnm(5)s(2)U34. The polypeptide is tRNA uridine 5-carboxymethylaminomethyl modification enzyme MnmG (Actinobacillus pleuropneumoniae serotype 7 (strain AP76)).